The primary structure comprises 119 residues: Large ribosomal subunit protein bL20 (119 aa).

It belongs to the bacterial ribosomal protein bL20 family.

Functionally, binds directly to 23S ribosomal RNA and is necessary for the in vitro assembly process of the 50S ribosomal subunit. It is not involved in the protein synthesizing functions of that subunit. This Aromatoleum aromaticum (strain DSM 19018 / LMG 30748 / EbN1) (Azoarcus sp. (strain EbN1)) protein is Large ribosomal subunit protein bL20.